The following is a 597-amino-acid chain: Fructan 1-exohydrolase (597 aa).

Positions 1–15 are cleaved as a signal peptide; that stretch reads MAQAWAFLLPVLVFG. Asp-76 is a catalytic residue. 3 N-linked (GlcNAc...) asparagine glycosylation sites follow: Asn-169, Asn-237, and Asn-249. Cys-447 and Cys-493 are disulfide-bonded. Asn-568 carries an N-linked (GlcNAc...) asparagine glycan.

Belongs to the glycosyl hydrolase 32 family.

The enzyme catalyses Hydrolysis of terminal, non-reducing (2-&gt;1)-linked beta-D-fructofuranose residues in fructans.. Its activity is regulated as follows. Inhibited by sucrose. In terms of biological role, hydrolyzes inulin-type beta-(2,1)-fructans. May play a role as a beta-(2,1)-trimmer during graminan biosynthesis. The sequence is that of Fructan 1-exohydrolase from Triticum urartu (Red wild einkorn).